The chain runs to 56 residues: Bdellin B-3 (56 aa).

In terms of domain architecture, Kazal-like spans 1-42; sequence DTECVCTKELHRVCGSDGVTYDNECLATCHGASVAHDHACEG. 3 cysteine pairs are disulfide-bonded: Cys4–Cys29, Cys6–Cys25, and Cys14–Cys40.

In terms of biological role, proteinase inhibitor. Blocks the activity of trypsin, plasmin and sperm acrosin. The chain is Bdellin B-3 from Hirudo medicinalis (Medicinal leech).